A 74-amino-acid polypeptide reads, in one-letter code: Defensin (74 aa).

Positions 1-22 (MRGLCICLVFLLVCGLVSATAA) are cleaved as a signal peptide. The propeptide occupies 23-36 (APAESEVAHLRVRR). Intrachain disulfides connect cysteine 40/cysteine 61, cysteine 47/cysteine 69, and cysteine 51/cysteine 71.

As to expression, hemolymph.

It localises to the secreted. Antibacterial activity against Gram-positive and Gram-negative bacteria. This Dermacentor variabilis (American dog tick) protein is Defensin (VSNA1).